The primary structure comprises 274 residues: Formamidopyrimidine-DNA glycosylase (274 aa).

Proline 2 serves as the catalytic Schiff-base intermediate with DNA. Residue glutamate 3 is the Proton donor of the active site. The active-site Proton donor; for beta-elimination activity is the lysine 57. DNA is bound by residues histidine 90, arginine 109, and lysine 150. The segment at 235-269 (FVYGRKDKACLICGHTIESIKQGQRSTFFCRHCQH) adopts an FPG-type zinc-finger fold. Arginine 259 functions as the Proton donor; for delta-elimination activity in the catalytic mechanism.

The protein belongs to the FPG family. Monomer. It depends on Zn(2+) as a cofactor.

The catalysed reaction is Hydrolysis of DNA containing ring-opened 7-methylguanine residues, releasing 2,6-diamino-4-hydroxy-5-(N-methyl)formamidopyrimidine.. It carries out the reaction 2'-deoxyribonucleotide-(2'-deoxyribose 5'-phosphate)-2'-deoxyribonucleotide-DNA = a 3'-end 2'-deoxyribonucleotide-(2,3-dehydro-2,3-deoxyribose 5'-phosphate)-DNA + a 5'-end 5'-phospho-2'-deoxyribonucleoside-DNA + H(+). Functionally, involved in base excision repair of DNA damaged by oxidation or by mutagenic agents. Acts as a DNA glycosylase that recognizes and removes damaged bases. Has a preference for oxidized purines, such as 7,8-dihydro-8-oxoguanine (8-oxoG). Has AP (apurinic/apyrimidinic) lyase activity and introduces nicks in the DNA strand. Cleaves the DNA backbone by beta-delta elimination to generate a single-strand break at the site of the removed base with both 3'- and 5'-phosphates. This chain is Formamidopyrimidine-DNA glycosylase, found in Proteus mirabilis (strain HI4320).